The following is a 758-amino-acid chain: 5-methyltetrahydropteroyltriglutamate--homocysteine methyltransferase (758 aa).

Residues 15–18 (RELK) and K114 contribute to the 5-methyltetrahydropteroyltri-L-glutamate site. L-homocysteine contacts are provided by residues 433–435 (IGS) and E486. Residues 433–435 (IGS) and E486 contribute to the L-methionine site. Residues 517–518 (RC) and W563 each bind 5-methyltetrahydropteroyltri-L-glutamate. D601 serves as a coordination point for L-homocysteine. D601 contributes to the L-methionine binding site. E607 is a binding site for 5-methyltetrahydropteroyltri-L-glutamate. Zn(2+)-binding residues include H643, C645, and E667. H696 functions as the Proton donor in the catalytic mechanism. C728 is a Zn(2+) binding site.

The protein belongs to the vitamin-B12 independent methionine synthase family. Zn(2+) is required as a cofactor.

The catalysed reaction is 5-methyltetrahydropteroyltri-L-glutamate + L-homocysteine = tetrahydropteroyltri-L-glutamate + L-methionine. It functions in the pathway amino-acid biosynthesis; L-methionine biosynthesis via de novo pathway; L-methionine from L-homocysteine (MetE route): step 1/1. Catalyzes the transfer of a methyl group from 5-methyltetrahydrofolate to homocysteine resulting in methionine formation. This Syntrophotalea carbinolica (strain DSM 2380 / NBRC 103641 / GraBd1) (Pelobacter carbinolicus) protein is 5-methyltetrahydropteroyltriglutamate--homocysteine methyltransferase.